The following is a 286-amino-acid chain: Aldo-keto reductase MAV_4483 (286 aa).

Tyr61 functions as the Proton donor in the catalytic mechanism. Residues Leu201, Val203, Val239, Arg241, Ser242, Arg247, and Asn251 each coordinate NADPH.

It belongs to the aldo/keto reductase family.

This is Aldo-keto reductase MAV_4483 from Mycobacterium avium (strain 104).